A 692-amino-acid polypeptide reads, in one-letter code: Elongation factor G (692 aa).

The region spanning 8–282 (EKTRNIGIMA…AVIDYLPSPL (275 aa)) is the tr-type G domain. Residues 17–24 (AHVDAGKT), 81–85 (DTPGH), and 135–138 (NKMD) each bind GTP.

Belongs to the TRAFAC class translation factor GTPase superfamily. Classic translation factor GTPase family. EF-G/EF-2 subfamily.

It localises to the cytoplasm. Catalyzes the GTP-dependent ribosomal translocation step during translation elongation. During this step, the ribosome changes from the pre-translocational (PRE) to the post-translocational (POST) state as the newly formed A-site-bound peptidyl-tRNA and P-site-bound deacylated tRNA move to the P and E sites, respectively. Catalyzes the coordinated movement of the two tRNA molecules, the mRNA and conformational changes in the ribosome. The polypeptide is Elongation factor G (Streptococcus agalactiae serotype III (strain NEM316)).